The sequence spans 384 residues: S-adenosylmethionine synthase (384 aa).

H15 is a binding site for ATP. Mg(2+) is bound at residue D17. E43 is a K(+) binding site. L-methionine contacts are provided by E56 and Q99. A flexible loop region spans residues 99–109 (QSPDINQGVDR). Residues 164–166 (DAK), 230–231 (RF), D239, 245–246 (RK), A262, and K266 contribute to the ATP site. D239 is a binding site for L-methionine. K270 lines the L-methionine pocket.

Belongs to the AdoMet synthase family. As to quaternary structure, homotetramer; dimer of dimers. It depends on Mg(2+) as a cofactor. K(+) serves as cofactor.

Its subcellular location is the cytoplasm. It catalyses the reaction L-methionine + ATP + H2O = S-adenosyl-L-methionine + phosphate + diphosphate. The protein operates within amino-acid biosynthesis; S-adenosyl-L-methionine biosynthesis; S-adenosyl-L-methionine from L-methionine: step 1/1. Its function is as follows. Catalyzes the formation of S-adenosylmethionine (AdoMet) from methionine and ATP. The overall synthetic reaction is composed of two sequential steps, AdoMet formation and the subsequent tripolyphosphate hydrolysis which occurs prior to release of AdoMet from the enzyme. The sequence is that of S-adenosylmethionine synthase from Photobacterium profundum (strain SS9).